The chain runs to 302 residues: Lipoyl synthase (302 aa).

Residues C44, C49, C55, C70, C74, C77, and S283 each contribute to the [4Fe-4S] cluster site. The region spanning 56-272 (WSKKHATVMI…ARVAKSKGFL (217 aa)) is the Radical SAM core domain.

This sequence belongs to the radical SAM superfamily. Lipoyl synthase family. [4Fe-4S] cluster is required as a cofactor.

The protein localises to the cytoplasm. It carries out the reaction [[Fe-S] cluster scaffold protein carrying a second [4Fe-4S](2+) cluster] + N(6)-octanoyl-L-lysyl-[protein] + 2 oxidized [2Fe-2S]-[ferredoxin] + 2 S-adenosyl-L-methionine + 4 H(+) = [[Fe-S] cluster scaffold protein] + N(6)-[(R)-dihydrolipoyl]-L-lysyl-[protein] + 4 Fe(3+) + 2 hydrogen sulfide + 2 5'-deoxyadenosine + 2 L-methionine + 2 reduced [2Fe-2S]-[ferredoxin]. It participates in protein modification; protein lipoylation via endogenous pathway; protein N(6)-(lipoyl)lysine from octanoyl-[acyl-carrier-protein]: step 2/2. Functionally, catalyzes the radical-mediated insertion of two sulfur atoms into the C-6 and C-8 positions of the octanoyl moiety bound to the lipoyl domains of lipoate-dependent enzymes, thereby converting the octanoylated domains into lipoylated derivatives. The chain is Lipoyl synthase from Orientia tsutsugamushi (strain Ikeda) (Rickettsia tsutsugamushi).